The primary structure comprises 257 residues: Alcohol dehydrogenase 1 (257 aa).

9–33 (VFVGGLGFIGYEACKTLITRDLASL) lines the NAD(+) pocket. Ser137 serves as a coordination point for substrate. Tyr150 acts as the Proton acceptor in catalysis.

This sequence belongs to the short-chain dehydrogenases/reductases (SDR) family. Homodimer.

The enzyme catalyses a primary alcohol + NAD(+) = an aldehyde + NADH + H(+). It carries out the reaction a secondary alcohol + NAD(+) = a ketone + NADH + H(+). The sequence is that of Alcohol dehydrogenase 1 (ADH1) from Ceratitis cosyra (Mango fruit fly).